The chain runs to 149 residues: Small ribosomal subunit protein bS6 (149 aa).

The disordered stretch occupies residues 93–149 (VGKHEEGPSAMMQKRDRDDRPRRDGDRPDRGGFGDRGPRPDRGDRDDRPRRPREDRA). The segment covering 94–149 (GKHEEGPSAMMQKRDRDDRPRRDGDRPDRGGFGDRGPRPDRGDRDDRPRRPREDRA) has biased composition (basic and acidic residues).

It belongs to the bacterial ribosomal protein bS6 family.

Binds together with bS18 to 16S ribosomal RNA. The chain is Small ribosomal subunit protein bS6 from Rhizobium meliloti (strain 1021) (Ensifer meliloti).